The following is a 325-amino-acid chain: MTASSVLLHTGQKMPLIGLGTWKSEPGQVKAAIKHALSAGYRHIDCASVYGNETEIGEALKESVGSGKAVPREELFVTSKLWNTKHHPEDVEPALRKTLADLQLEYLDLYLMHWPYAFERGDNPFPKNADGTVRYDSTHYKETWKALEVLVAKGLVKALGLSNFNSRQIDDVLSVASVRPAVLQVECHPYLAQNELIAHCHARGLEVTAYSPLGSSDRAWRHPDEPVLLEEPVVLALAEKHGRSPAQILLRWQVQRKVICIPKSINPSRILQNIQVFDFTFSPEEMKQLDALNKNWRYIVPMITVDGKRVPRDAGHPLYPFNDPY.

Threonine 2 carries the N-acetylthreonine modification. A Phosphoserine modification is found at serine 4. Residues 11–20, threonine 21, and tryptophan 22 each bind NADP(+); that span reads GQKMPLIGLG. A Phosphoserine modification is found at serine 38. Aspartate 45 contributes to the NADP(+) binding site. Tyrosine 50 functions as the Proton donor in the catalytic mechanism. Lysine 127 is subject to N6-acetyllysine; alternate. Position 127 is an N6-succinyllysine; alternate (lysine 127). An N6-succinyllysine modification is found at lysine 145. Serine 162, asparagine 163, serine 211, leucine 213, serine 215, serine 216, lysine 263, serine 264, isoleucine 265, arginine 269, glutamine 272, and asparagine 273 together coordinate NADP(+). A Phosphoserine modification is found at serine 211.

This sequence belongs to the aldo/keto reductase family. As to quaternary structure, monomer. In terms of tissue distribution, widely expressed.

Its subcellular location is the cytoplasm. It is found in the cytosol. The protein resides in the apical cell membrane. It carries out the reaction a primary alcohol + NADP(+) = an aldehyde + NADPH + H(+). The enzyme catalyses L-gulonate + NADP(+) = aldehydo-D-glucuronate + NADPH + H(+). It catalyses the reaction L-gulono-1,4-lactone + NADP(+) = D-glucurono-3,6-lactone + NADPH + H(+). The catalysed reaction is allyl alcohol + NADP(+) = acrolein + NADPH + H(+). It carries out the reaction glycerol + NADP(+) = D-glyceraldehyde + NADPH + H(+). The enzyme catalyses glycerol + NADP(+) = L-glyceraldehyde + NADPH + H(+). It catalyses the reaction hydroxyacetone + NADP(+) = methylglyoxal + NADPH + H(+). The catalysed reaction is 3-deoxyfructose + NADP(+) = 3-deoxyglucosone + NADPH + H(+). It carries out the reaction (R)-mevalonate + NADP(+) = (R)-mevaldate + NADPH + H(+). The enzyme catalyses pyridine 3-methanol + NADP(+) = pyridine-3-carbaldehyde + NADPH + H(+). It catalyses the reaction S-nitroso-CoA + NADPH + H(+) = sulfinamide-CoA + NADP(+). The catalysed reaction is S-nitrosoglutathione + NADPH + H(+) = S-(hydroxysulfenamide)glutathione + NADP(+). Catalyzes the NADPH-dependent reduction of a wide variety of carbonyl-containing compounds to their corresponding alcohols. Displays enzymatic activity towards endogenous metabolites such as aromatic and aliphatic aldehydes, ketones, monosaccharides and bile acids, with a preference for negatively charged substrates, such as glucuronate and succinic semialdehyde. Plays an important role in ascorbic acid biosynthesis by catalyzing the reduction of D-glucuronic acid and D-glucurono-gamma-lactone. Functions as a detoxifiying enzyme by reducing a range of toxic aldehydes. Reduces methylglyoxal and 3-deoxyglucosone, which are present at elevated levels under hyperglycemic conditions and are cytotoxic. Involved in the detoxification of lipid-derived aldehydes like acrolein. Plays a role in the activation of procarcinogens, such as polycyclic aromatic hydrocarbon trans-dihydrodiols, and in the metabolism of various xenobiotics and drugs. Also acts as an inhibitor of protein S-nitrosylation by mediating degradation of S-nitroso-coenzyme A (S-nitroso-CoA), a cofactor required to S-nitrosylate proteins. S-nitroso-CoA reductase activity is involved in reprogramming intermediary metabolism in renal proximal tubules, notably by inhibiting protein S-nitrosylation of isoform 2 of PKM (PKM2). Also acts as a S-nitroso-glutathione reductase by catalyzing the NADPH-dependent reduction of S-nitrosoglutathione. Displays no reductase activity towards retinoids. The polypeptide is Aldo-keto reductase family 1 member A1 (Mus musculus (Mouse)).